We begin with the raw amino-acid sequence, 201 residues long: tRNA (guanine-N(7)-)-methyltransferase (201 aa).

Residues E33, E58, D85, and D106 each contribute to the S-adenosyl-L-methionine site. D106 is a catalytic residue. Residues K110, D142, and 180-183 each bind substrate; that span reads TTYE.

This sequence belongs to the class I-like SAM-binding methyltransferase superfamily. TrmB family.

It catalyses the reaction guanosine(46) in tRNA + S-adenosyl-L-methionine = N(7)-methylguanosine(46) in tRNA + S-adenosyl-L-homocysteine. It functions in the pathway tRNA modification; N(7)-methylguanine-tRNA biosynthesis. In terms of biological role, catalyzes the formation of N(7)-methylguanine at position 46 (m7G46) in tRNA. The chain is tRNA (guanine-N(7)-)-methyltransferase from Mesomycoplasma hyopneumoniae (strain J / ATCC 25934 / NCTC 10110) (Mycoplasma hyopneumoniae).